We begin with the raw amino-acid sequence, 1042 residues long: Aldehyde reductase lnaA (1042 aa).

The tract at residues 29–425 is adenylation (A) domain; it reads HAFLNPSAMA…GRRDHQVKVR (397 aa). The Carrier domain maps to 532–609; it reads DNEDSTRGKL…RLAGILEERI (78 aa). S569 bears the O-(pantetheine 4'-phosphoryl)serine mark. A short-chain dehydrogenase/reductase (R) domain region spans residues 655–897; that stretch reads LTGATGFVGS…FVPVDYVNAV (243 aa).

Belongs to the NRP synthetase family.

It carries out the reaction L-tyrosinal + AMP + diphosphate + NADP(+) = L-tyrosine + ATP + NADPH + H(+). The protein operates within secondary metabolite biosynthesis. In terms of biological role, non-canonical nonribosomal peptide synthetase; part of the lna gene cluster that mediates the biosynthesis of diastereomeric piperazines. Lna and lnb clusters encode sets of enzymes that produce overlapping sets of previously undescribed metabolites such as piperazinomycin-like metabolites or morpholine. The lna and lnb biosynthetic pathways appear to be part of a signaling network that controls the formation of sclerotia, a resilient overwintering structure. One primary function of the non-canonical nonribosomal peptide synthetases lnaA and lnbA consists in the reduction of L-tyrosine. The presence in the clusters of tailoring enzymes such as the oxidoreductases lnaB, lnbB, lnaE or lnbE, as well as of the cytochrome P450 monooxygenases lnaC, lnaD, or lnbC, might explain formation of various diastereomeric piperazines. The protein is Aldehyde reductase lnaA of Aspergillus flavus (strain ATCC 200026 / FGSC A1120 / IAM 13836 / NRRL 3357 / JCM 12722 / SRRC 167).